Here is a 585-residue protein sequence, read N- to C-terminus: A-type ATP synthase subunit A (585 aa).

231 to 238 (GPFGSGKT) provides a ligand contact to ATP.

Belongs to the ATPase alpha/beta chains family. As to quaternary structure, has multiple subunits with at least A(3), B(3), C, D, E, F, H, I and proteolipid K(x).

Its subcellular location is the cell membrane. The enzyme catalyses ATP + H2O + 4 H(+)(in) = ADP + phosphate + 5 H(+)(out). Component of the A-type ATP synthase that produces ATP from ADP in the presence of a proton gradient across the membrane. The A chain is the catalytic subunit. The protein is A-type ATP synthase subunit A of Thermococcus gammatolerans (strain DSM 15229 / JCM 11827 / EJ3).